A 368-amino-acid chain; its full sequence is F-box only protein 28 (368 aa).

Basic and acidic residues predominate over residues Met-1 to Glu-11. The tract at residues Met-1 to Asp-56 is disordered. The span at Glu-12–Gly-21 shows a compositional bias: gly residues. The segment covering Ser-22–Gln-32 has biased composition (low complexity). Positions Pro-33–Ser-45 are enriched in pro residues. Positions Gln-46–Pro-55 are enriched in low complexity. The F-box domain occupies Asn-61–Val-109. Phosphoserine is present on residues Ser-235 and Ser-242. Thr-270 bears the Phosphothreonine mark. Residues Met-328–Lys-368 form a disordered region. Ser-344 carries the post-translational modification Phosphoserine.

Part of a SCF (SKP1-cullin-F-box) protein ligase complex.

The protein resides in the chromosome. It localises to the centromere. The protein localises to the kinetochore. In terms of biological role, probably recognizes and binds to some phosphorylated proteins and promotes their ubiquitination and degradation. The chain is F-box only protein 28 (Fbxo28) from Mus musculus (Mouse).